The primary structure comprises 86 residues: Large ribosomal subunit protein bL27 (86 aa).

Over residues M1–T10 the composition is skewed to gly residues. Residues M1–R20 are disordered.

Belongs to the bacterial ribosomal protein bL27 family.

In Bordetella parapertussis (strain 12822 / ATCC BAA-587 / NCTC 13253), this protein is Large ribosomal subunit protein bL27.